Here is a 167-residue protein sequence, read N- to C-terminus: NAD(P)H-quinone oxidoreductase subunit I, chloroplastic (167 aa).

4Fe-4S ferredoxin-type domains follow at residues 55–84 (GRIHFEFDKCIACEVCVRVCPIDLPVVDWK) and 95–124 (LNYSIDFGICIFCGNCVEYCPTNCLSMTEE). Residues Cys64, Cys67, Cys70, Cys74, Cys104, Cys107, Cys110, and Cys114 each coordinate [4Fe-4S] cluster.

This sequence belongs to the complex I 23 kDa subunit family. In terms of assembly, NDH is composed of at least 16 different subunits, 5 of which are encoded in the nucleus. Requires [4Fe-4S] cluster as cofactor.

The protein localises to the plastid. The protein resides in the chloroplast thylakoid membrane. It carries out the reaction a plastoquinone + NADH + (n+1) H(+)(in) = a plastoquinol + NAD(+) + n H(+)(out). The catalysed reaction is a plastoquinone + NADPH + (n+1) H(+)(in) = a plastoquinol + NADP(+) + n H(+)(out). NDH shuttles electrons from NAD(P)H:plastoquinone, via FMN and iron-sulfur (Fe-S) centers, to quinones in the photosynthetic chain and possibly in a chloroplast respiratory chain. The immediate electron acceptor for the enzyme in this species is believed to be plastoquinone. Couples the redox reaction to proton translocation, and thus conserves the redox energy in a proton gradient. The polypeptide is NAD(P)H-quinone oxidoreductase subunit I, chloroplastic (Lobularia maritima (Sweet alyssum)).